A 312-amino-acid polypeptide reads, in one-letter code: NADPH-dependent alpha-keto amide reductase (312 aa).

NADPH contacts are provided by Gly25, Thr26, Arg27, and Asp59. Residues Tyr64 and His122 each act as proton donor in the active site. Position 123 is a phosphoserine (Ser123). 10 residues coordinate NADPH: Ser157, Gln179, Ser208, Leu210, Thr257, Thr258, Ser259, Ser260, Lys261, and Arg264.

Belongs to the aldo/keto reductase family. Monomer. In terms of processing, the N-terminus is blocked.

The protein resides in the cytoplasm. Its subcellular location is the nucleus. Its function is as follows. Reduces aromatic alpha-keto amides, aliphatic and aromatic alpha-keto esters, but not beta-keto esters. The chain is NADPH-dependent alpha-keto amide reductase from Saccharomyces cerevisiae (strain ATCC 204508 / S288c) (Baker's yeast).